The sequence spans 583 residues: Interactor of constitutive active ROPs 2, chloroplastic (583 aa).

Residues methionine 1–valine 55 constitute a chloroplast transit peptide. Disordered regions lie at residues methionine 1 to alanine 80 and glutamate 101 to glutamate 125. Residues serine 34–proline 52 are compositionally biased toward polar residues. Coiled-coil stretches lie at residues glycine 74–glutamate 207 and methionine 238–threonine 516. The span at alanine 102 to lysine 115 shows a compositional bias: basic and acidic residues. The segment at leucine 518–lysine 583 is disordered. Residues serine 519–glycine 529 show a composition bias toward low complexity. The residue at position 540 (serine 540) is a Phosphoserine.

The protein belongs to the ICR family. Interacts with ARAC8, ARAC11 and KIN13A in vitro, but not with ICR1 or SEC3A.

It localises to the plastid. It is found in the chloroplast. In terms of biological role, acts as a scaffold, mediating interaction of ROPs with different proteins. The sequence is that of Interactor of constitutive active ROPs 2, chloroplastic (ICR2) from Arabidopsis thaliana (Mouse-ear cress).